The primary structure comprises 228 residues: Cytidylate kinase (228 aa).

An ATP-binding site is contributed by 10 to 18 (GPSGSGKGT).

The protein belongs to the cytidylate kinase family. Type 1 subfamily.

It localises to the cytoplasm. It carries out the reaction CMP + ATP = CDP + ADP. It catalyses the reaction dCMP + ATP = dCDP + ADP. This Acinetobacter baumannii (strain AB0057) protein is Cytidylate kinase.